The following is a 436-amino-acid chain: MTHKQSINVIGAGLAGSEAAWQIAKRGGHVRLYEMRPVKQTPAHHTDKFAELVCSNSLRGNSLANAVGVLKEEMRHLDSVIIKAADEAAVPAGGALAVDRHDFAGKVTEYVKGHPNVTVVQEEVTEIPEGPAIIATGPLTSEALAEQLKAFSGEEYLYFYDAAAPIIDAETIDRDKVYLKSRYDKGEAAYLNCPMTEEEFDRFYQALIEAETVPLREFEKDIFFEGCMPIEVMASRGKKTMLFGPLKPVGLEDPKTGKRPFAVVQLRQDNSSGTLYNMVGFQTHLKWGPQKEVIRMIPGLENADIVRYGVMHRNTFLNSPNLLKPTYQSKKRSDLFFAGQMTGVEGYVESAAAGLVAGINAFKWTQSQELAVFPEETMIGSMAAYITNANAKTFQPMNANFGLVPPLNVRIKAKKERYEALAKRALESIQNFMKEV.

11–16 contributes to the FAD binding site; that stretch reads GAGLAG.

It belongs to the MnmG family. TrmFO subfamily. FAD is required as a cofactor.

The protein resides in the cytoplasm. The enzyme catalyses uridine(54) in tRNA + (6R)-5,10-methylene-5,6,7,8-tetrahydrofolate + NADH + H(+) = 5-methyluridine(54) in tRNA + (6S)-5,6,7,8-tetrahydrofolate + NAD(+). The catalysed reaction is uridine(54) in tRNA + (6R)-5,10-methylene-5,6,7,8-tetrahydrofolate + NADPH + H(+) = 5-methyluridine(54) in tRNA + (6S)-5,6,7,8-tetrahydrofolate + NADP(+). Functionally, catalyzes the folate-dependent formation of 5-methyl-uridine at position 54 (M-5-U54) in all tRNAs. In Shouchella clausii (strain KSM-K16) (Alkalihalobacillus clausii), this protein is Methylenetetrahydrofolate--tRNA-(uracil-5-)-methyltransferase TrmFO.